The following is a 206-amino-acid chain: Thymidylate kinase (206 aa).

7-14 (GGEGSGKS) is a binding site for ATP.

It belongs to the thymidylate kinase family.

The catalysed reaction is dTMP + ATP = dTDP + ADP. In terms of biological role, phosphorylation of dTMP to form dTDP in both de novo and salvage pathways of dTTP synthesis. This is Thymidylate kinase (tmk) from Chlamydia pneumoniae (Chlamydophila pneumoniae).